Here is a 318-residue protein sequence, read N- to C-terminus: Ficolin-1-B (318 aa).

The N-terminal stretch at 1–19 (MTRWVQTFLLLVAVIRSYA) is a signal peptide. Residues 42-99 (GCPGIPGVPGPQGPSGPAGAKGEKGFPGIPGKMGPTGLKGERGISGPKGQKGDKGDPG) enclose the Collagen-like domain. Residues 100 to 318 (IPVVGMAQNC…VSEIKFRPQP (219 aa)) enclose the Fibrinogen C-terminal domain. An intrachain disulfide couples Cys109 to Cys137. N-linked (GlcNAc...) asparagine glycans are attached at residues Asn205 and Asn222. Asp253 contributes to the Ca(2+) binding site. An N-linked (GlcNAc...) asparagine glycan is attached at Asn254. Asp255 and Ser257 together coordinate Ca(2+). Cys261 and Cys274 are oxidised to a cystine. 273–275 (SCH) provides a ligand contact to a carbohydrate. N-linked (GlcNAc...) asparagine glycosylation occurs at Asn287.

It belongs to the ficolin lectin family. Homotrimer. May form higher-order oligomers. N-glycosylated. Expressed in peripheral blood leukocytes. Also detected at lower levels in spleen and lung.

Its subcellular location is the secreted. In terms of biological role, may function in innate immunity through activation of the lectin complement pathway. Binds to GalNAc and GlcNAc carbohydrate moieties. This Xenopus laevis (African clawed frog) protein is Ficolin-1-B.